We begin with the raw amino-acid sequence, 237 residues long: MKPKISFNNVVMRYGGFLALDRLNLDIADGEFVTVVGPSGCGKSTAMNIADGLLQPSGGGILVGDKPVTGPGPERGVIFQQYALFPWLTVRQNVEFGLTDFADALPKALSGGMKQRCAIARAYAAAPEILLMDEPFGALDALTRVHMQDQLLDAWSRERRTVMFITHDVDEAVYLANRVIVMAARPGRLDQIIPVDLPYPRTEAIRLSPEFAAIRNRVWHAVYHQQPQTDQQSSHGQ.

Residues 5-205 enclose the ABC transporter domain; sequence ISFNNVVMRY…DLPYPRTEAI (201 aa). 37–44 lines the ATP pocket; that stretch reads GPSGCGKS.

The protein belongs to the ABC transporter superfamily. As to quaternary structure, the complex is composed of two ATP-binding proteins (BMEII0108), two transmembrane proteins (BMEII0107) and a solute-binding protein (BMEII0109).

The protein resides in the cell inner membrane. In terms of biological role, probably part of an ABC transporter complex. Probably Responsible for energy coupling to the transport system. The sequence is that of Putative ATP-binding protein BMEII0108 from Brucella melitensis biotype 1 (strain ATCC 23456 / CCUG 17765 / NCTC 10094 / 16M).